A 778-amino-acid chain; its full sequence is Protection of telomeres protein 1 (778 aa).

The protein belongs to the telombin family. As to quaternary structure, homodimer or homooligomer. Component of the telomerase ribonucleoprotein complex. Binds single-stranded telomeric DNA as a monomer. Found in a complex with TERF1, TINF2 and TNKS1. Interacts with TNKS1.

Its subcellular location is the nucleus. The protein localises to the chromosome. It localises to the telomere. Its function is as follows. Component of the telomerase ribonucleoprotein (RNP) complex that is essential for the replication of chromosome termini. Is a component of the double-stranded telomeric DNA-binding TRF1 complex that is involved in the regulation of telomere length by cis-inhibition of telomerase. Also acts as a single-stranded telomeric DNA-binding protein and thus may act as a downstream effector of the TRF1 complex and may transduce information about telomere maintenance and/or length to the telomere terminus. Binds to at least two telomeric single-stranded 5'-TTAGGG-3' repeats (G-strand). Its activity is TERT dependent but it does not increase TERT activity. This Gallus gallus (Chicken) protein is Protection of telomeres protein 1 (POT1).